We begin with the raw amino-acid sequence, 634 residues long: Coilin (634 aa).

3 disordered regions span residues valine 87 to asparagine 135, proline 149 to glutamine 276, and glycine 342 to leucine 361. Over residues serine 152 to glutamate 181 the composition is skewed to polar residues. Composition is skewed to basic and acidic residues over residues threonine 223–asparagine 234 and lysine 251–aspartate 272.

Belongs to the coilin family. As to expression, in egg chambers expressed in the follicle cells, nurse cells and oocyte. Expressed in the larval brain, salivary glands, fat bodies and in the somatic hub cells at the tip of the testis. Expressed in the spermatogonia and spermatocytes, and in the adult ejaculatory duct (at protein level). Expressed in the adult Malpighian tubules.

The protein localises to the nucleus. It localises to the nucleoplasm. Its subcellular location is the cajal body. It is found in the chromosome. The protein resides in the centromere. The protein localises to the cytoplasm. It localises to the cytoskeleton. Its subcellular location is the spindle. Its function is as follows. Component of nuclear coiled bodies, also known as Cajal bodies or CBs, which are involved in the modification and assembly of nucleoplasmic snRNPs. Required for Cajal body formation. This chain is Coilin, found in Drosophila melanogaster (Fruit fly).